Reading from the N-terminus, the 513-residue chain is uncharacterized protein (513 aa).

The region spanning 11–219 (HLEVERKFDV…SKLARVLGAT (209 aa)) is the CYTH domain. The region spanning 228–506 (PQPPADPVHR…LEAALRKLDK (279 aa)) is the CHAD domain.

This is an uncharacterized protein from Mycobacterium tuberculosis (strain CDC 1551 / Oshkosh).